Here is a 158-residue protein sequence, read N- to C-terminus: UPF0329 protein ECU06_0050 (158 aa).

It belongs to the UPF0329 family.

In Encephalitozoon cuniculi (strain GB-M1) (Microsporidian parasite), this protein is UPF0329 protein ECU06_0050.